The chain runs to 32 residues: Beta-hexosaminidase (32 aa).

Residues 1–32 (GKSSSRPLGDATLGDLDFDIEVTQDYWDDLAR) form the GH18 domain. E21 (proton donor) is an active-site residue.

It belongs to the glycosyl hydrolase 18 family. Chitinase class II subfamily.

It catalyses the reaction Hydrolysis of terminal non-reducing N-acetyl-D-hexosamine residues in N-acetyl-beta-D-hexosaminides.. Its activity is regulated as follows. Activity is decreased by HgCl(2) and maltose. Activity is stimulated by Na(2)SeO(4), BaCl(2), MgCl(2), chondroitin 6-sulfate and phenylmethylsulfonyl fluoride. Preferentially hydrolyzes pNP-GlcNAc, hydrolyzes pNP-GalNAc to a lesser extent. The polypeptide is Beta-hexosaminidase (Palythoa caribaeorum (White encrusting zoanthid coral)).